The chain runs to 428 residues: uncharacterized protein (428 aa).

This is an uncharacterized protein from Treponema pallidum (strain Nichols).